Reading from the N-terminus, the 823-residue chain is Polyadenylation and cleavage factor homolog 11 (823 aa).

Residues 3–135 form the CID domain; it reads SVESAARDYR…ELDMKINKLD (133 aa). 5 disordered regions span residues 142 to 176, 188 to 301, 340 to 395, 570 to 643, and 728 to 755; these read NPQT…STST, SSTP…KTLK, SSAP…LPAP, LPAP…EKRS, and WLTP…VASS. 2 stretches are compositionally biased toward polar residues: residues 157–176 and 188–198; these read APSQ…STST and SSTPGAASASK. Residues 200-226 are compositionally biased toward basic and acidic residues; it reads VVEKTKSPGTVNKEKQVKKEPKQDPLD. Composition is skewed to low complexity over residues 227–242 and 342–353; these read KLLP…SSPA and APPFQHPQQHHP. Pro residues predominate over residues 374 to 390; it reads PQDPAPIVPVQAPPPQQ. Residues 571 to 581 show a composition bias toward low complexity; sequence PAPARSPSSPR. The segment covering 609–624 has biased composition (polar residues); that stretch reads QPQQNARWGGANKQQN.

The sequence is that of Polyadenylation and cleavage factor homolog 11 (pcf-11) from Caenorhabditis elegans.